The sequence spans 462 residues: uncharacterized protein (462 aa).

Transmembrane regions (helical) follow at residues 381 to 401 (WILGSMILFTILASILRFKGM) and 433 to 453 (LWILEPIIRVTSLILLGNLYI).

It localises to the cell membrane. This is an uncharacterized protein from Methanocaldococcus jannaschii (strain ATCC 43067 / DSM 2661 / JAL-1 / JCM 10045 / NBRC 100440) (Methanococcus jannaschii).